The following is a 66-amino-acid chain: Toxin Tppa1 (66 aa).

The LCN-type CS-alpha/beta domain maps to 1–63 (KDGYLVGNDG…TWSRSTNRCG (63 aa)). 4 disulfide bridges follow: cysteine 11–cysteine 62, cysteine 15–cysteine 37, cysteine 23–cysteine 43, and cysteine 27–cysteine 45.

The protein belongs to the long (4 C-C) scorpion toxin superfamily. Sodium channel inhibitor family. Beta subfamily. As to expression, expressed by the venom gland.

The protein resides in the secreted. Its function is as follows. Beta toxins bind voltage-independently at site-4 of sodium channels (Nav) and shift the voltage of activation toward more negative potentials thereby affecting sodium channel activation and promoting spontaneous and repetitive firing. This Tityus pachyurus (Colombian scorpion) protein is Toxin Tppa1.